A 251-amino-acid chain; its full sequence is Flap endonuclease Xni (251 aa).

Asp104 provides a ligand contact to Mg(2+). Residues 160-249 (VQPQQLPDYW…IDGNLQQLRL (90 aa)) form the 5'-3' exonuclease domain. Positions 171, 172, 180, 182, and 185 each coordinate K(+). An interaction with DNA region spans residues 184–189 (GIGPKS).

It belongs to the Xni family. Mg(2+) serves as cofactor. It depends on K(+) as a cofactor.

Functionally, has flap endonuclease activity. During DNA replication, flap endonucleases cleave the 5'-overhanging flap structure that is generated by displacement synthesis when DNA polymerase encounters the 5'-end of a downstream Okazaki fragment. The protein is Flap endonuclease Xni of Escherichia coli O139:H28 (strain E24377A / ETEC).